A 159-amino-acid chain; its full sequence is NADH-quinone oxidoreductase subunit B (159 aa).

[4Fe-4S] cluster contacts are provided by Cys-36, Cys-37, Cys-102, and Cys-132.

The protein belongs to the complex I 20 kDa subunit family. NDH-1 is composed of 14 different subunits. Subunits NuoB, C, D, E, F, and G constitute the peripheral sector of the complex. [4Fe-4S] cluster serves as cofactor.

Its subcellular location is the cell inner membrane. It carries out the reaction a quinone + NADH + 5 H(+)(in) = a quinol + NAD(+) + 4 H(+)(out). Functionally, NDH-1 shuttles electrons from NADH, via FMN and iron-sulfur (Fe-S) centers, to quinones in the respiratory chain. Couples the redox reaction to proton translocation (for every two electrons transferred, four hydrogen ions are translocated across the cytoplasmic membrane), and thus conserves the redox energy in a proton gradient. The sequence is that of NADH-quinone oxidoreductase subunit B from Albidiferax ferrireducens (strain ATCC BAA-621 / DSM 15236 / T118) (Rhodoferax ferrireducens).